A 208-amino-acid polypeptide reads, in one-letter code: Putative speedy protein E7 (208 aa).

The protein belongs to the Speedy/Ringo family.

The chain is Putative speedy protein E7 (SPDYE7P) from Homo sapiens (Human).